We begin with the raw amino-acid sequence, 287 residues long: Large ribosomal subunit protein uL2 (287 aa).

A disordered region spans residues 221–287 (RGSVMNPCDH…SKRSRGGRDS (67 aa)). The segment covering 258 to 287 (KTRKKNKPSNKLVVRRRRRISKRSRGGRDS) has biased composition (basic residues).

The protein belongs to the universal ribosomal protein uL2 family. As to quaternary structure, part of the 50S ribosomal subunit. Forms a bridge to the 30S subunit in the 70S ribosome.

Its function is as follows. One of the primary rRNA binding proteins. Required for association of the 30S and 50S subunits to form the 70S ribosome, for tRNA binding and peptide bond formation. It has been suggested to have peptidyltransferase activity; this is somewhat controversial. Makes several contacts with the 16S rRNA in the 70S ribosome. The chain is Large ribosomal subunit protein uL2 from Prochlorococcus marinus subsp. pastoris (strain CCMP1986 / NIES-2087 / MED4).